A 119-amino-acid chain; its full sequence is Centrocin 1 (119 aa).

The signal sequence occupies residues 1-20; the sequence is MMIKIAVVLCAVMATTMVRA. Residues 21 to 50 constitute a propeptide that is removed on maturation; the sequence is KYVEEQELADLLDLLISEEVSSPDDAVALQ. W52 and W53 each carry 6'-bromotryptophan. An intrachain disulfide couples C75 to C110. Residues 81 to 104 constitute a propeptide that is removed on maturation; that stretch reads SPQEARAKVLEAFPEMKEADLDEE. N117 bears the Asparagine amide mark.

As to quaternary structure, heterodimer of a light and a heavy chain, probably disulfide-linked.

Functionally, has antimicrobial activity against Gram-negative bacteria, Gram-positive bacteria and against fungi with minimum inhibitory concentration (MIC) between 0.78 uM and 50 uM. Shows little hemolytic activity even at a concentration of 100 uM. Has no antimicrobial activity. Shows no hemolytic activity. This Echinus esculentus (Sea urchin) protein is Centrocin 1.